A 355-amino-acid chain; its full sequence is DNA polymerase IV (355 aa).

The UmuC domain maps to 7–188 (IIHIDMDCFY…LPLSKIPGVG (182 aa)). Mg(2+) is bound by residues Asp11 and Asp106. The active site involves Glu107.

This sequence belongs to the DNA polymerase type-Y family. Monomer. It depends on Mg(2+) as a cofactor.

Its subcellular location is the cytoplasm. The catalysed reaction is DNA(n) + a 2'-deoxyribonucleoside 5'-triphosphate = DNA(n+1) + diphosphate. Poorly processive, error-prone DNA polymerase involved in untargeted mutagenesis. Copies undamaged DNA at stalled replication forks, which arise in vivo from mismatched or misaligned primer ends. These misaligned primers can be extended by PolIV. Exhibits no 3'-5' exonuclease (proofreading) activity. May be involved in translesional synthesis, in conjunction with the beta clamp from PolIII. This Mannheimia succiniciproducens (strain KCTC 0769BP / MBEL55E) protein is DNA polymerase IV.